Reading from the N-terminus, the 1213-residue chain is A disintegrin and metalloproteinase with thrombospondin motifs 2 (1213 aa).

The first 28 residues, 1-28, serve as a signal peptide directing secretion; it reads MDPPAGAARRLLCPALLLLLLPPPPLLL. Residues 29–260 constitute a propeptide that is removed on maturation; sequence LPPPPASVRL…INSSRRRVRR (232 aa). A glycan (N-linked (GlcNAc...) asparagine) is linked at Asn111. A disordered region spans residues 211–232; sequence YRRPPTPKPPPVSEPQALDTGV. The span at 214–223 shows a compositional bias: pro residues; that stretch reads PPTPKPPPVS. A glycan (N-linked (GlcNAc...) asparagine) is linked at Asn252. The region spanning 267-471 is the Peptidase M12B domain; sequence YNIEVLLGVD…HSYDCLRDDP (205 aa). 10 disulfides stabilise this stretch: Cys344–Cys393, Cys387–Cys466, Cys426–Cys452, Cys493–Cys518, Cys504–Cys527, Cys513–Cys546, Cys540–Cys551, Cys574–Cys611, Cys578–Cys616, and Cys589–Cys601. His409 serves as a coordination point for Zn(2+). Glu410 is a catalytic residue. Zn(2+) contacts are provided by His413 and His419. The Disintegrin domain occupies 480 to 560; the sequence is PQLPGLHYSM…CIWLTPDILK (81 aa). The region spanning 561–617 is the TSP type-1 1 domain; the sequence is RDGNWGAWTPFGSCSRTCGTGVKFRTRQCDNPHPANGGRTCSGLAYDFQLCNPQDCP. A Cell attachment site motif is present at residues 692–694; that stretch reads RGD. The spacer stretch occupies residues 723 to 851; it reads CKVVKGTFTR…LNVDDNNVLE (129 aa). 3 TSP type-1 domains span residues 855–913, 915–975, and 976–1030; these read VRHE…NPQE, SQPV…NREL, and CPGR…APCP. N-linked (GlcNAc...) asparagine glycosylation is found at Asn949, Asn950, and Asn994. 3 disulfide bridges follow: Cys988–Cys1024, Cys992–Cys1029, and Cys1003–Cys1013. Asn1032 carries an N-linked (GlcNAc...) asparagine glycan. One can recognise a PLAC domain in the interval 1060–1098; sequence SKDQCQGDKSMFCRMEVLSRYCSIPSYNKLCCKSCNPPR. Residues Asn1099, Asn1147, and Asn1152 are each glycosylated (N-linked (GlcNAc...) asparagine).

In terms of assembly, may belong to a multimeric complex. Binds specifically to collagen type XIV. Zn(2+) serves as cofactor. In terms of processing, the precursor is cleaved by a furin endopeptidase. Post-translationally, glycosylated. Can be O-fucosylated by POFUT2 on a serine or a threonine residue found within the consensus sequence C1-X(2)-(S/T)-C2-G of the TSP type-1 repeat domains where C1 and C2 are the first and second cysteine residue of the repeat, respectively. Fucosylated repeats can then be further glycosylated by the addition of a beta-1,3-glucose residue by the glucosyltransferase, B3GALTL. Fucosylation mediates the efficient secretion of ADAMTS family members. Can also be C-glycosylated with one or two mannose molecules on tryptophan residues within the consensus sequence W-X-X-W of the TPRs, and N-glycosylated. These other glycosylations can also facilitate secretion.

The protein resides in the secreted. The protein localises to the extracellular space. It localises to the extracellular matrix. The enzyme catalyses Cleaves the N-propeptide of collagen chain alpha1(I) at Pro-|-Gln and of alpha1(II) and alpha2(I) at Ala-|-Gln.. In terms of biological role, cleaves the propeptides of type I and II collagen prior to fibril assembly. Does not act on type III collagen. Cleaves lysyl oxidase LOX at a site downstream of its propeptide cleavage site to produce a short LOX form with reduced collagen-binding activity. The protein is A disintegrin and metalloproteinase with thrombospondin motifs 2 (Adamts2) of Mus musculus (Mouse).